The primary structure comprises 77 residues: U8-lycotoxin-Ls1m (77 aa).

The first 20 residues, 1-20, serve as a signal peptide directing secretion; sequence MKLMIFTGLVLFAIVRLIEA. A propeptide spanning residues 21-26 is cleaved from the precursor; it reads QAENEK.

Belongs to the neurotoxin 19 (CSTX) family. 08 (U8-Lctx) subfamily. In terms of processing, contains 4 disulfide bonds. In terms of tissue distribution, expressed by the venom gland.

It localises to the secreted. The polypeptide is U8-lycotoxin-Ls1m (Lycosa singoriensis (Wolf spider)).